Consider the following 643-residue polypeptide: Phosphomethylpyrimidine synthase (643 aa).

Substrate is bound by residues asparagine 248, methionine 277, tyrosine 306, histidine 342, 362–364 (SRG), 403–406 (DGLR), and glutamate 442. Residue histidine 446 coordinates Zn(2+). Tyrosine 469 is a binding site for substrate. Histidine 510 provides a ligand contact to Zn(2+). [4Fe-4S] cluster contacts are provided by cysteine 590, cysteine 593, and cysteine 598.

The protein belongs to the ThiC family. In terms of assembly, homodimer. [4Fe-4S] cluster is required as a cofactor.

It catalyses the reaction 5-amino-1-(5-phospho-beta-D-ribosyl)imidazole + S-adenosyl-L-methionine = 4-amino-2-methyl-5-(phosphooxymethyl)pyrimidine + CO + 5'-deoxyadenosine + formate + L-methionine + 3 H(+). Its pathway is cofactor biosynthesis; thiamine diphosphate biosynthesis. Catalyzes the synthesis of the hydroxymethylpyrimidine phosphate (HMP-P) moiety of thiamine from aminoimidazole ribotide (AIR) in a radical S-adenosyl-L-methionine (SAM)-dependent reaction. In Burkholderia cenocepacia (strain HI2424), this protein is Phosphomethylpyrimidine synthase.